A 357-amino-acid polypeptide reads, in one-letter code: GDSL esterase/lipase At5g45950 (357 aa).

Positions 1 to 23 (MLLVAFVTLLVAVALQPLPSVLS) are cleaved as a signal peptide. A glycan (N-linked (GlcNAc...) asparagine) is linked at asparagine 37. Serine 47 (nucleophile) is an active-site residue. A glycan (N-linked (GlcNAc...) asparagine) is linked at asparagine 132. Catalysis depends on residues aspartate 331 and histidine 334.

It belongs to the 'GDSL' lipolytic enzyme family.

It localises to the secreted. The protein is GDSL esterase/lipase At5g45950 of Arabidopsis thaliana (Mouse-ear cress).